The chain runs to 339 residues: Transcription initiation factor IIB (339 aa).

The segment at 39 to 70 (EELICPVCGSKNIIKDYERAEIVCEMCGCVLQ) adopts a TFIIB-type zinc-finger fold. Positions 43, 46, 62, and 65 each coordinate Zn(2+). 2 consecutive repeat copies span residues 156–239 (SELD…SREL) and 250–331 (DYVP…ELTE).

This sequence belongs to the TFIIB family.

Functionally, stabilizes TBP binding to an archaeal box-A promoter. Also responsible for recruiting RNA polymerase II to the pre-initiation complex (DNA-TBP-TFIIB). In Methanococcus maripaludis (strain C7 / ATCC BAA-1331), this protein is Transcription initiation factor IIB.